Reading from the N-terminus, the 384-residue chain is N-acetylneuraminate epimerase (384 aa).

Residues 1 to 24 form the signal peptide; it reads MNMKTLLTYATLLSVTAFSHVVYA. Kelch repeat units lie at residues 46 to 90, 92 to 145, 147 to 184, 185 to 230, 233 to 281, 303 to 352, and 354 to 383; these read KVYV…SVIG, YIYL…YSPD, RQIL…RIVD, DYMG…VIEG, VTLI…VAGA, QAFE…TTSE, and VLIV…VEVI. The active-site Proton acceptor is glutamate 239.

Belongs to the NanM family. Homodimer.

It localises to the periplasm. The catalysed reaction is N-acetyl-alpha-neuraminate = N-acetyl-beta-neuraminate. Converts alpha-N-acetylneuranimic acid (Neu5Ac) to the beta-anomer, accelerating the equilibrium between the alpha- and beta-anomers. Probably facilitates sialidase-negative bacteria to compete successfully for limited amounts of extracellular Neu5Ac, which is likely taken up in the beta-anomer. In addition, the rapid removal of sialic acid from solution might be advantageous to the bacterium to damp down host responses. The polypeptide is N-acetylneuraminate epimerase (Vibrio cholerae serotype O1 (strain ATCC 39315 / El Tor Inaba N16961)).